The chain runs to 260 residues: Putative protein phosphatase (260 aa).

The 246-residue stretch at 9-254 folds into the PPM-type phosphatase domain; it reads FTGLSKKGPV…DNITAALVNL (246 aa).

It carries out the reaction O-phospho-L-seryl-[protein] + H2O = L-seryl-[protein] + phosphate. The enzyme catalyses O-phospho-L-threonyl-[protein] + H2O = L-threonyl-[protein] + phosphate. In Mycoplasma genitalium (strain ATCC 33530 / DSM 19775 / NCTC 10195 / G37) (Mycoplasmoides genitalium), this protein is Putative protein phosphatase.